Reading from the N-terminus, the 440-residue chain is D-serine dehydratase (440 aa).

Lys116 bears the N6-(pyridoxal phosphate)lysine mark.

It belongs to the serine/threonine dehydratase family. DsdA subfamily. In terms of assembly, monomer. The cofactor is pyridoxal 5'-phosphate.

It catalyses the reaction D-serine = pyruvate + NH4(+). In Salmonella paratyphi A (strain ATCC 9150 / SARB42), this protein is D-serine dehydratase.